Here is a 326-residue protein sequence, read N- to C-terminus: Lipopolysaccharide heptosyltransferase 1 (326 aa).

5 residues coordinate ADP: threonine 187, threonine 188, lysine 192, glutamate 222, and methionine 242. ADP-L-glycero-beta-D-manno-heptose-binding residues include threonine 187, threonine 188, lysine 192, glutamate 222, methionine 242, aspartate 261, threonine 262, glycine 263, and histidine 266. ADP-binding residues include threonine 262 and glycine 263.

This sequence belongs to the glycosyltransferase 9 family. As to quaternary structure, monomer.

Its subcellular location is the cell inner membrane. The enzyme catalyses an alpha-Kdo-(2-&gt;4)-alpha-Kdo-(2-&gt;6)-lipid A + ADP-L-glycero-beta-D-manno-heptose = an L-alpha-D-Hep-(1-&gt;5)-[alpha-Kdo-(2-&gt;4)]-alpha-Kdo-(2-&gt;6)-lipid A + ADP + H(+). The catalysed reaction is alpha-Kdo-(2-&gt;4)-alpha-Kdo-(2-&gt;6)-lipid A (E. coli) + ADP-L-glycero-beta-D-manno-heptose = L-alpha-D-Hep-(1-&gt;5)-[alpha-Kdo-(2-&gt;4)]-alpha-Kdo-(2-&gt;6)-lipid A (E. coli) + ADP + H(+). Its pathway is bacterial outer membrane biogenesis; LPS core biosynthesis. Its activity is regulated as follows. Inhibited by ADP-L-glycero-beta-D-gluco-2-deoxy-2-fluoro-heptose (ADP-2F-heptose), a non-cleavable analog of the substrate ADP-L-glycero-beta-D-manno-heptose. Its function is as follows. Glycosyltransferase involved in the biosynthesis of the core oligosaccharide region of lipopolysaccharide (LPS). Catalyzes the addition of the first heptose unit to one 3-deoxy-D-manno-octulosonic acid (Kdo) residue of the Kdo2-lipid A module. This chain is Lipopolysaccharide heptosyltransferase 1, found in Escherichia coli O18:K1:H7 (strain RS218 / NMEC).